The chain runs to 207 residues: Octanoyltransferase (207 aa).

The region spanning 29–204 (DDTADELWLV…ELMVQLGDEE (176 aa)) is the BPL/LPL catalytic domain. Substrate contacts are provided by residues 68-75 (RGGQVTYH), 135-137 (SLG), and 148-150 (GVA). Cysteine 166 acts as the Acyl-thioester intermediate in catalysis.

This sequence belongs to the LipB family.

It is found in the cytoplasm. The catalysed reaction is octanoyl-[ACP] + L-lysyl-[protein] = N(6)-octanoyl-L-lysyl-[protein] + holo-[ACP] + H(+). Its pathway is protein modification; protein lipoylation via endogenous pathway; protein N(6)-(lipoyl)lysine from octanoyl-[acyl-carrier-protein]: step 1/2. Its function is as follows. Catalyzes the transfer of endogenously produced octanoic acid from octanoyl-acyl-carrier-protein onto the lipoyl domains of lipoate-dependent enzymes. Lipoyl-ACP can also act as a substrate although octanoyl-ACP is likely to be the physiological substrate. The sequence is that of Octanoyltransferase from Methylococcus capsulatus (strain ATCC 33009 / NCIMB 11132 / Bath).